We begin with the raw amino-acid sequence, 150 residues long: Histone H2B.2 (150 aa).

2 stretches are compositionally biased toward basic and acidic residues: residues 1-21 (MAPKAEKKPAEKKPAEEKAGE) and 33-49 (EKRLPASKGEKGGEGKK). The tract at residues 1 to 58 (MAPKAEKKPAEKKPAEEKAGEKAPAAGKKPKAEKRLPASKGEKGGEGKKERGRKKAKK) is disordered. N6-acetyllysine is present on residues K7 and K34. K146 is covalently cross-linked (Glycyl lysine isopeptide (Lys-Gly) (interchain with G-Cter in ubiquitin)).

Belongs to the histone H2B family. The nucleosome is a histone octamer containing two molecules each of H2A, H2B, H3 and H4 assembled in one H3-H4 heterotetramer and two H2A-H2B heterodimers. The octamer wraps approximately 147 bp of DNA. In terms of processing, can be acetylated to form H2BK6ac and H2BK33ac. Monoubiquitinated by BRE1 to form H2BK143ub1 and deubiquitinated by UBP26. Required for heterochromatic histone H3 di- and trimethylation at H3K4me. May give a specific tag for epigenetic transcriptional activation.

The protein resides in the nucleus. The protein localises to the chromosome. Its function is as follows. Core component of nucleosome. Nucleosomes wrap and compact DNA into chromatin, limiting DNA accessibility to the cellular machineries which require DNA as a template. Histones thereby play a central role in transcription regulation, DNA repair, DNA replication and chromosomal stability. DNA accessibility is regulated via a complex set of post-translational modifications of histones, also called histone code, and nucleosome remodeling. In Oryza sativa subsp. indica (Rice), this protein is Histone H2B.2 (H2B.2).